A 157-amino-acid chain; its full sequence is Crossover junction endodeoxyribonuclease RuvC (157 aa).

Active-site residues include Asp-9, Glu-70, and Asp-142. Mg(2+) is bound by residues Asp-9, Glu-70, and Asp-142.

This sequence belongs to the RuvC family. As to quaternary structure, homodimer which binds Holliday junction (HJ) DNA. The HJ becomes 2-fold symmetrical on binding to RuvC with unstacked arms; it has a different conformation from HJ DNA in complex with RuvA. In the full resolvosome a probable DNA-RuvA(4)-RuvB(12)-RuvC(2) complex forms which resolves the HJ. The cofactor is Mg(2+).

The protein localises to the cytoplasm. The enzyme catalyses Endonucleolytic cleavage at a junction such as a reciprocal single-stranded crossover between two homologous DNA duplexes (Holliday junction).. Functionally, the RuvA-RuvB-RuvC complex processes Holliday junction (HJ) DNA during genetic recombination and DNA repair. Endonuclease that resolves HJ intermediates. Cleaves cruciform DNA by making single-stranded nicks across the HJ at symmetrical positions within the homologous arms, yielding a 5'-phosphate and a 3'-hydroxyl group; requires a central core of homology in the junction. The consensus cleavage sequence is 5'-(A/T)TT(C/G)-3'. Cleavage occurs on the 3'-side of the TT dinucleotide at the point of strand exchange. HJ branch migration catalyzed by RuvA-RuvB allows RuvC to scan DNA until it finds its consensus sequence, where it cleaves and resolves the cruciform DNA. The polypeptide is Crossover junction endodeoxyribonuclease RuvC (Cyanothece sp. (strain PCC 7425 / ATCC 29141)).